A 213-amino-acid chain; its full sequence is Uracil phosphoribosyltransferase (213 aa).

Residues arginine 78, arginine 103, and 131–139 (DPMLATGGT) contribute to the 5-phospho-alpha-D-ribose 1-diphosphate site. Uracil is bound by residues isoleucine 197 and 202 to 204 (GDA). Residue aspartate 203 participates in 5-phospho-alpha-D-ribose 1-diphosphate binding.

It belongs to the UPRTase family. Requires Mg(2+) as cofactor.

It catalyses the reaction UMP + diphosphate = 5-phospho-alpha-D-ribose 1-diphosphate + uracil. It participates in pyrimidine metabolism; UMP biosynthesis via salvage pathway; UMP from uracil: step 1/1. Its activity is regulated as follows. Allosterically activated by GTP. In terms of biological role, catalyzes the conversion of uracil and 5-phospho-alpha-D-ribose 1-diphosphate (PRPP) to UMP and diphosphate. This is Uracil phosphoribosyltransferase from Bifidobacterium adolescentis (strain ATCC 15703 / DSM 20083 / NCTC 11814 / E194a).